Here is a 319-residue protein sequence, read N- to C-terminus: Plastid lipid-associated protein 2, chloroplastic (319 aa).

The transit peptide at 1–59 (MATVQFFNQFPCKTRVQSSANSKPLSKPPSSLVPMSALTRRPSFPPGEFAVSRSDFRVR) directs the protein to the chloroplast. The disordered stretch occupies residues 17–39 (QSSANSKPLSKPPSSLVPMSALT). The segment covering 18–36 (SSANSKPLSKPPSSLVPMS) has biased composition (low complexity).

The protein belongs to the PAP/fibrillin family. As to expression, expressed almost exclusively in petals. Very weak expression in all other organs.

The protein resides in the plastid. It is found in the chloroplast. In terms of biological role, may stabilize the accumulated carotenoid structures. This chain is Plastid lipid-associated protein 2, chloroplastic (PAP2), found in Brassica campestris (Field mustard).